Reading from the N-terminus, the 370-residue chain is NSFL1 cofactor p47 (370 aa).

The disordered stretch occupies residues 54 to 73 (SQATPSSVSRGTAPSDNRVT). Phosphoserine is present on residues S74, S102, and S114. Disordered regions lie at residues 80 to 116 (HDQDEEEEEEEGQRFYAGGSERSGQQIVGPPRKKSPN) and 138 to 157 (TKSPGETSKPRPFAGGGYRL). Residues 109–115 (PPRKKSP) carry the Nuclear localization signal motif. At S140 the chain carries Phosphoserine; by CDK1. Y167 carries the phosphotyrosine modification. Residues 172–175 (RRRH) carry the Nuclear localization signal motif. Residues S176, S192, and S272 each carry the phosphoserine modification. The region spanning 179–244 (DVHVVLKLWK…MEDHRDEDFV (66 aa)) is the SEP domain. Residues 291–368 (EAEPTTNIQI…NLLNAVIVQR (78 aa)) enclose the UBX domain.

Belongs to the NSFL1C family. As to quaternary structure, part of a ternary complex containing STX5A, NSFL1C and VCP. NSFL1C forms a homotrimer that binds to one end of a VCP homohexamer. The complex binds to membranes enriched in phosphatidylethanolamine-containing lipids and promotes Golgi membrane fusion. Interaction with VCIP135 leads to dissociation of the complex via ATP hydrolysis by VCP. Binds ubiquitin and mono-ubiquitinated proteins via its N-terminal UBA-like domain when bound to VCP. In terms of processing, phosphorylated during mitosis. Phosphorylation inhibits interaction with Golgi membranes and is required for the fragmentation of the Golgi stacks during mitosis. As to expression, highly expressed in heart, brain, spleen, lung, liver, muscle, kidney and testis.

The protein localises to the nucleus. It localises to the golgi apparatus. Its subcellular location is the golgi stack. The protein resides in the chromosome. It is found in the cytoplasm. The protein localises to the cytoskeleton. It localises to the microtubule organizing center. Its subcellular location is the centrosome. In terms of biological role, reduces the ATPase activity of VCP. Necessary for the fragmentation of Golgi stacks during mitosis and for VCP-mediated reassembly of Golgi stacks after mitosis. May play a role in VCP-mediated formation of transitional endoplasmic reticulum (tER). Inhibits the activity of CTSL (in vitro). Together with UBXN2B/p37, regulates the centrosomal levels of kinase AURKA/Aurora A during mitotic progression by promoting AURKA removal from centrosomes in prophase. Also, regulates spindle orientation during mitosis. The chain is NSFL1 cofactor p47 (Nsfl1c) from Rattus norvegicus (Rat).